A 1870-amino-acid polypeptide reads, in one-letter code: Non-reducing polyketide synthase pkgA (1870 aa).

An N-terminal acylcarrier protein transacylase domain (SAT) region spans residues 40–279 (IQDLIRRLHR…SRHSALPISG (240 aa)). Residues 416 to 838 (DAKLAVVGMA…GGNTTLLLED (423 aa)) enclose the Ketosynthase family 3 (KS3) domain. Residues 453 to 492 (PPDRFDLDAHFDPSGEKENTTTKGSQSNRPLSRQAEQTDP) are disordered. Residues 455–472 (DRFDLDAHFDPSGEKENT) show a composition bias toward basic and acidic residues. Positions 473–492 (TTKGSQSNRPLSRQAEQTDP) are enriched in polar residues. Catalysis depends on for beta-ketoacyl synthase activity residues Cys-577, His-712, and His-755. Positions 947–1282 (AFSGQGCLYH…QSFASLRRGD (336 aa)) are malonyl-CoA:ACP transacylase (MAT) domain. Positions 1004–1027 (RCPHRESTPSSDASHDSNTNRTST) are disordered. The segment covering 1011 to 1027 (TPSSDASHDSNTNRTST) has biased composition (polar residues). Residues 1364 to 1704 (TSSVQQIIFE…PRALMPVLFP (341 aa)) form a product template (PT) domain region. Residues 1368–1502 (QQIIFEEYDE…ATVCYEEAQD (135 aa)) form an N-terminal hotdog fold region. The PKS/mFAS DH domain maps to 1368–1700 (QQIIFEEYDE…FKAVPRALMP (333 aa)). The active-site Proton acceptor; for dehydratase activity is His-1400. Positions 1538 to 1700 (KGGPRVNNFF…FKAVPRALMP (163 aa)) are C-terminal hotdog fold. The active-site Proton donor; for dehydratase activity is Asp-1602. The Carrier domain maps to 1795 to 1870 (QSQNAQATAC…VQDLVTWLSK (76 aa)). Position 1832 is an O-(pantetheine 4'-phosphoryl)serine (Ser-1832).

Pantetheine 4'-phosphate is required as a cofactor.

It catalyses the reaction holo-[ACP] + 6 malonyl-CoA + acetyl-CoA + 6 H(+) = 3,5,7,9,11,13-hexaoxotetradecanoyl-[ACP] + 6 CO2 + 7 CoA. The enzyme catalyses holo-[ACP] + 5 malonyl-CoA + acetyl-CoA + 5 H(+) = 3,5,7,9,11-pentaoxododecanoyl-[ACP] + 5 CO2 + 6 CoA. Its pathway is secondary metabolite biosynthesis. Its function is as follows. Non-reducing polyketide synthase; part of the pkg gene cluster that mediates the biosynthesis of dihydrocitreoisocoumarin and 6,8-dihydroxy-3-(2-oxopropyl)-isocoumarin. The non-reducing polyketide synthase pkgA performs the condensation of one acetyl-CoA starter unit with 6 and 5 malonyl-CoA units, respectively. As pkgA lacks a releasing domain, the thioesterase pkgB is necessary to break the thioester bond and release dihydrocitreoisocoumarin and 6,8-dihydroxy-3-(2-oxopropyl)-isocoumarin from pkgA. This chain is Non-reducing polyketide synthase pkgA, found in Emericella nidulans (strain FGSC A4 / ATCC 38163 / CBS 112.46 / NRRL 194 / M139) (Aspergillus nidulans).